A 258-amino-acid polypeptide reads, in one-letter code: Imidazole glycerol phosphate synthase subunit HisF (258 aa).

Catalysis depends on residues Asp-11 and Asp-130.

This sequence belongs to the HisA/HisF family. In terms of assembly, heterodimer of HisH and HisF.

The protein resides in the cytoplasm. It carries out the reaction 5-[(5-phospho-1-deoxy-D-ribulos-1-ylimino)methylamino]-1-(5-phospho-beta-D-ribosyl)imidazole-4-carboxamide + L-glutamine = D-erythro-1-(imidazol-4-yl)glycerol 3-phosphate + 5-amino-1-(5-phospho-beta-D-ribosyl)imidazole-4-carboxamide + L-glutamate + H(+). It functions in the pathway amino-acid biosynthesis; L-histidine biosynthesis; L-histidine from 5-phospho-alpha-D-ribose 1-diphosphate: step 5/9. IGPS catalyzes the conversion of PRFAR and glutamine to IGP, AICAR and glutamate. The HisF subunit catalyzes the cyclization activity that produces IGP and AICAR from PRFAR using the ammonia provided by the HisH subunit. This is Imidazole glycerol phosphate synthase subunit HisF from Escherichia coli O6:K15:H31 (strain 536 / UPEC).